The primary structure comprises 106 residues: UPF0060 membrane protein RL1530 (106 aa).

The next 4 membrane-spanning stretches (helical) occupy residues 4–24, 30–50, 58–78, and 86–106; these read IIFA…WAWL, VWWL…LTLV, TFAA…WLVE, and DIGG…APRG.

This sequence belongs to the UPF0060 family.

It localises to the cell inner membrane. The sequence is that of UPF0060 membrane protein RL1530 from Rhizobium johnstonii (strain DSM 114642 / LMG 32736 / 3841) (Rhizobium leguminosarum bv. viciae).